A 613-amino-acid polypeptide reads, in one-letter code: Dihydroxy-acid dehydratase (613 aa).

D81 lines the Mg(2+) pocket. [2Fe-2S] cluster is bound at residue C122. Mg(2+) contacts are provided by D123 and K124. K124 is modified (N6-carboxylysine). C193 lines the [2Fe-2S] cluster pocket. Mg(2+) is bound at residue E489. S515 functions as the Proton acceptor in the catalytic mechanism.

Belongs to the IlvD/Edd family. As to quaternary structure, homodimer. Requires [2Fe-2S] cluster as cofactor. The cofactor is Mg(2+).

The enzyme catalyses (2R)-2,3-dihydroxy-3-methylbutanoate = 3-methyl-2-oxobutanoate + H2O. The catalysed reaction is (2R,3R)-2,3-dihydroxy-3-methylpentanoate = (S)-3-methyl-2-oxopentanoate + H2O. It functions in the pathway amino-acid biosynthesis; L-isoleucine biosynthesis; L-isoleucine from 2-oxobutanoate: step 3/4. The protein operates within amino-acid biosynthesis; L-valine biosynthesis; L-valine from pyruvate: step 3/4. In terms of biological role, functions in the biosynthesis of branched-chain amino acids. Catalyzes the dehydration of (2R,3R)-2,3-dihydroxy-3-methylpentanoate (2,3-dihydroxy-3-methylvalerate) into 2-oxo-3-methylpentanoate (2-oxo-3-methylvalerate) and of (2R)-2,3-dihydroxy-3-methylbutanoate (2,3-dihydroxyisovalerate) into 2-oxo-3-methylbutanoate (2-oxoisovalerate), the penultimate precursor to L-isoleucine and L-valine, respectively. In Pseudomonas fluorescens (strain Pf0-1), this protein is Dihydroxy-acid dehydratase.